The primary structure comprises 546 residues: CTP synthase (546 aa).

Positions 1–269 (MNPNTKIIFV…DAKLVELLNL (269 aa)) are amidoligase domain. Ser16 is a CTP binding site. Ser16 is a binding site for UTP. ATP-binding positions include 17–22 (SLGKGV) and Asp74. 2 residues coordinate Mg(2+): Asp74 and Glu143. CTP-binding positions include 150-152 (DIE), 190-195 (KTKPTQ), and Lys226. UTP is bound by residues 190–195 (KTKPTQ) and Lys226. In terms of domain architecture, Glutamine amidotransferase type-1 spans 294-546 (TIAMVGKYVS…IHAAVEKSNK (253 aa)). Residue Gly356 participates in L-glutamine binding. Cys383 serves as the catalytic Nucleophile; for glutamine hydrolysis. L-glutamine-binding positions include 384 to 387 (LGMQ), Glu407, and Arg474. Catalysis depends on residues His519 and Glu521.

It belongs to the CTP synthase family. As to quaternary structure, homotetramer.

It catalyses the reaction UTP + L-glutamine + ATP + H2O = CTP + L-glutamate + ADP + phosphate + 2 H(+). It carries out the reaction L-glutamine + H2O = L-glutamate + NH4(+). The enzyme catalyses UTP + NH4(+) + ATP = CTP + ADP + phosphate + 2 H(+). It functions in the pathway pyrimidine metabolism; CTP biosynthesis via de novo pathway; CTP from UDP: step 2/2. Allosterically activated by GTP, when glutamine is the substrate; GTP has no effect on the reaction when ammonia is the substrate. The allosteric effector GTP functions by stabilizing the protein conformation that binds the tetrahedral intermediate(s) formed during glutamine hydrolysis. Inhibited by the product CTP, via allosteric rather than competitive inhibition. Catalyzes the ATP-dependent amination of UTP to CTP with either L-glutamine or ammonia as the source of nitrogen. Regulates intracellular CTP levels through interactions with the four ribonucleotide triphosphates. The protein is CTP synthase of Francisella philomiragia subsp. philomiragia (strain ATCC 25017 / CCUG 19701 / FSC 153 / O#319-036).